Consider the following 412-residue polypeptide: Heme chaperone HemW (412 aa).

The Radical SAM core domain occupies 4–241; that stretch reads GTYLMPTAAY…RHGQEVLTQA (238 aa). Tyr13 provides a ligand contact to S-adenosyl-L-methionine. 3 residues coordinate [2Fe-2S] cluster: Cys19, Cys23, and Cys26. S-adenosyl-L-methionine-binding positions include Gly72, 73 to 74, Glu105, Gln132, Arg144, and Asp169; that span reads GT.

The protein belongs to the anaerobic coproporphyrinogen-III oxidase family. HemW subfamily. [4Fe-4S] cluster is required as a cofactor.

Its subcellular location is the cytoplasm. Its function is as follows. Probably acts as a heme chaperone, transferring heme to an unknown acceptor. Binds one molecule of heme per monomer, possibly covalently. Binds 1 [2Fe-2S] cluster. Although this protein has sequence motifs typically found in proteins binding the [4Fe-4S]-AdoMet radical-SAM cluster and S-adenosylmethionine, spectroscopic evidence suggests that a [2Fe-2S] cluster is present; S-adenosylmethionine was not detected. Has no detectable coproporphyrinogen-III oxidase activity. This Synechocystis sp. (strain ATCC 27184 / PCC 6803 / Kazusa) protein is Heme chaperone HemW.